The following is a 202-amino-acid chain: Large ribosomal subunit protein bL25 (202 aa).

The disordered stretch occupies residues 180–202; sequence PKQEAFEEDAEPSPGEEPEGENQ. A compositionally biased stretch (acidic residues) spans 185 to 202; sequence FEEDAEPSPGEEPEGENQ.

It belongs to the bacterial ribosomal protein bL25 family. CTC subfamily. As to quaternary structure, part of the 50S ribosomal subunit; part of the 5S rRNA/L5/L18/L25 subcomplex. Contacts the 5S rRNA. Binds to the 5S rRNA independently of L5 and L18.

In terms of biological role, this is one of the proteins that binds to the 5S RNA in the ribosome where it forms part of the central protuberance. The sequence is that of Large ribosomal subunit protein bL25 from Bacillus velezensis (strain DSM 23117 / BGSC 10A6 / LMG 26770 / FZB42) (Bacillus amyloliquefaciens subsp. plantarum).